The chain runs to 361 residues: D-alanine--D-alanine ligase (361 aa).

An ATP-grasp domain is found at 140–345 (KHLFAQAGLD…YAELIEKLVA (206 aa)). 173 to 228 (EGELGYPCFVKPANLGSSVGISKCRSREELDQAFELAFQYDRKIVVEEGVIGREIE) is an ATP binding site. Residues D299, E312, and N314 each coordinate Mg(2+).

Belongs to the D-alanine--D-alanine ligase family. The cofactor is Mg(2+). It depends on Mn(2+) as a cofactor.

It is found in the cytoplasm. The enzyme catalyses 2 D-alanine + ATP = D-alanyl-D-alanine + ADP + phosphate + H(+). It participates in cell wall biogenesis; peptidoglycan biosynthesis. In terms of biological role, cell wall formation. In Bacillus licheniformis (strain ATCC 14580 / DSM 13 / JCM 2505 / CCUG 7422 / NBRC 12200 / NCIMB 9375 / NCTC 10341 / NRRL NRS-1264 / Gibson 46), this protein is D-alanine--D-alanine ligase.